A 925-amino-acid polypeptide reads, in one-letter code: Centrosomal protein of 104 kDa (925 aa).

The stretch at 209-289 (EVAQIIRKLD…RAEVYEQLEL (81 aa)) forms a coiled coil. HEAT repeat units lie at residues 529–567 (TIPV…LQII) and 604–640 (GFTI…YRQH). A coiled-coil region spans residues 677 to 725 (DAEMRARRKAATEEAEKQKKEEIKALQGQLAALKEIQAEVQEKESDAVK). The segment at 883–925 (PALQPGKSSAVAASGPLGSKAGSKIPTPKGGLSKSSSRTYAKR) is disordered. Over residues 915 to 925 (SKSSSRTYAKR) the composition is skewed to polar residues.

In terms of assembly, interacts with CCP110 and CEP97. Interacts with ARMC9, TOGARAM1, CCDC66 and CSPP1.

The protein resides in the cell projection. The protein localises to the cilium. Its subcellular location is the cytoplasm. It localises to the cytoskeleton. It is found in the microtubule organizing center. The protein resides in the centrosome. The protein localises to the centriole. Its subcellular location is the spindle pole. Functionally, required for ciliogenesis and for structural integrity at the ciliary tip. The chain is Centrosomal protein of 104 kDa (CEP104) from Homo sapiens (Human).